The sequence spans 256 residues: Probable transcriptional regulatory protein A1I_03240 (256 aa).

The disordered stretch occupies residues 1–21 (MAGHSKFKNIQHRKGAQDKKR).

Belongs to the TACO1 family.

It localises to the cytoplasm. The polypeptide is Probable transcriptional regulatory protein A1I_03240 (Rickettsia bellii (strain OSU 85-389)).